A 169-amino-acid polypeptide reads, in one-letter code: Desumoylating isopeptidase 1 (169 aa).

A PPPDE domain is found at 8–150 (HLVRLYVYDM…LGQALRPLLD (143 aa)). H39 is an active-site residue. The Nuclear export signal 1 signature appears at 84–92 (IFLEYLSSL). The active site involves C109. Positions 140–154 (PLGQALRPLLDSVQI) match the Nuclear export signal 2 motif.

It belongs to the DeSI family. Homodimer.

The protein resides in the cytoplasm. It is found in the nucleus. The catalysed reaction is S-hexadecanoyl-L-cysteinyl-[protein] + H2O = L-cysteinyl-[protein] + hexadecanoate + H(+). Functionally, protease which deconjugates SUMO1, SUMO2 and SUMO3 from some substrate proteins. Has isopeptidase but not SUMO-processing activity. Collaborates with ubqln4 in the export of ubiquitinated proteins from the nucleus to the cytoplasm. Exhibits palmitoyl protein thioesterase (S-depalmitoylation) activity towards synthetic substrates 4-methylumbelliferyl-6-S-palmitoyl-beta-D-glucopyranoside and S-depalmitoylation probe 5 (DPP-5). The chain is Desumoylating isopeptidase 1 from Xenopus laevis (African clawed frog).